A 461-amino-acid polypeptide reads, in one-letter code: Tol-Pal system protein TolB 2 (461 aa).

Positions 1 to 20 (MKIRHLLLLAGLVSAPAIVA) are cleaved as a signal peptide. Residues 28–47 (SSSAAQASGDDDGGLTGSVS) form a disordered region.

Belongs to the TolB family. As to quaternary structure, the Tol-Pal system is composed of five core proteins: the inner membrane proteins TolA, TolQ and TolR, the periplasmic protein TolB and the outer membrane protein Pal. They form a network linking the inner and outer membranes and the peptidoglycan layer.

It localises to the periplasm. Its function is as follows. Part of the Tol-Pal system, which plays a role in outer membrane invagination during cell division and is important for maintaining outer membrane integrity. This chain is Tol-Pal system protein TolB 2, found in Novosphingobium aromaticivorans (strain ATCC 700278 / DSM 12444 / CCUG 56034 / CIP 105152 / NBRC 16084 / F199).